The following is an 82-amino-acid chain: Small ribosomal subunit protein eS27 (82 aa).

Residues Cys-37, Cys-40, Cys-56, and Cys-59 each contribute to the Zn(2+) site.

Belongs to the eukaryotic ribosomal protein eS27 family. In terms of assembly, component of the small ribosomal subunit. Mature ribosomes consist of a small (40S) and a large (60S) subunit. The 40S subunit contains about 32 different proteins and 1 molecule of RNA (18S). The 60S subunit contains 45 different proteins and 3 molecules of RNA (25S, 5.8S and 5S). Requires Zn(2+) as cofactor.

It is found in the cytoplasm. Its function is as follows. Component of the ribosome, a large ribonucleoprotein complex responsible for the synthesis of proteins in the cell. The small ribosomal subunit (SSU) binds messenger RNAs (mRNAs) and translates the encoded message by selecting cognate aminoacyl-transfer RNA (tRNA) molecules. The large subunit (LSU) contains the ribosomal catalytic site termed the peptidyl transferase center (PTC), which catalyzes the formation of peptide bonds, thereby polymerizing the amino acids delivered by tRNAs into a polypeptide chain. The nascent polypeptides leave the ribosome through a tunnel in the LSU and interact with protein factors that function in enzymatic processing, targeting, and the membrane insertion of nascent chains at the exit of the ribosomal tunnel. This is Small ribosomal subunit protein eS27 (RPS27) from Candida albicans (strain SC5314 / ATCC MYA-2876) (Yeast).